The chain runs to 113 residues: DNA-binding protein Mevan_1162 (113 aa).

Over residues 1–12 (MDPEEIKQKKLQ) the composition is skewed to basic and acidic residues. The tract at residues 1–22 (MDPEEIKQKKLQEMQAKAQDPE) is disordered.

It belongs to the PDCD5 family.

The protein is DNA-binding protein Mevan_1162 of Methanococcus vannielii (strain ATCC 35089 / DSM 1224 / JCM 13029 / OCM 148 / SB).